Reading from the N-terminus, the 318-residue chain is Magnetosome protein MamM (318 aa).

A transmembrane domain (TMD) region spans residues 1 to 210; it reads MRKSGCTVCS…FMDAYRGLMD (210 aa). Helical transmembrane passes span 13–33, 39–59, 81–101, and 117–137; these read IGWV…FVGL, AMLA…MVVI, FILS…LLVH, and LIVL…YFYS. The tract at residues 211 to 318 is C-terminal domain (CTD); it reads HTAGEAVQNR…DEVMLSKVDN (108 aa). Fe cation contacts are provided by Asp249, His264, His285, and Glu289.

Belongs to the cation diffusion facilitator (CDF) transporter (TC 2.A.4) family. As to quaternary structure, forms homodimers via its C-terminal domain (CTD) in the presence of metal cations. Interacts with MamB via their CTD.

The protein resides in the magnetosome membrane. Its subcellular location is the cell inner membrane. Probably plays a role in biomineralization. Required for stable accumulation of MamB. Probably binds and transports iron. May nucleate iron crystal formation. The protein is Magnetosome protein MamM (mamM) of Paramagnetospirillum magneticum (strain ATCC 700264 / AMB-1) (Magnetospirillum magneticum).